The chain runs to 516 residues: RNA-binding region-containing protein 3 (516 aa).

Disordered stretches follow at residues 1–27 (MAAPEQPLPMSRGCQNSSSLSPPRGDR), 106–130 (VHSPCPSLGTEKKKRSDDPVEDDKE), 210–254 (EDYM…DEDR), and 264–283 (ANLQPKRPKPIKQRHVRKKR). Serine 21 is modified (phosphoserine). One can recognise an RRM 1 domain in the interval 27–102 (RTLLVRHLPA…HTLVVEFAKE (76 aa)). Serine 108 carries the post-translational modification Phosphoserine. Positions 115 to 130 (TEKKKRSDDPVEDDKE) are enriched in basic and acidic residues. The span at 217 to 230 (APLPPTSPQPPEEP) shows a compositional bias: pro residues. Over residues 269–283 (KRPKPIKQRHVRKKR) the composition is skewed to basic residues. The region spanning 419–502 (CRIYVKNLAK…KPMVVQFARS (84 aa)) is the RRM 2 domain.

Component of the U11/U12 snRNPs that are part of the U12-type spliceosome. Found in a complex with m(7)G-capped U12 snRNA. Interacts with PDCD7.

The protein resides in the nucleus. In terms of biological role, participates in pre-mRNA U12-dependent splicing, performed by the minor spliceosome which removes U12-type introns. U12-type introns comprises less than 1% of all non-coding sequences. Binds to the 3'-stem-loop of m(7)G-capped U12 snRNA. The protein is RNA-binding region-containing protein 3 (RNPC3) of Bos taurus (Bovine).